Here is a 156-residue protein sequence, read N- to C-terminus: Small ribosomal subunit protein uS7 (156 aa).

Belongs to the universal ribosomal protein uS7 family. Part of the 30S ribosomal subunit. Contacts proteins S9 and S11.

Its function is as follows. One of the primary rRNA binding proteins, it binds directly to 16S rRNA where it nucleates assembly of the head domain of the 30S subunit. Is located at the subunit interface close to the decoding center, probably blocks exit of the E-site tRNA. The polypeptide is Small ribosomal subunit protein uS7 (Caldanaerobacter subterraneus subsp. tengcongensis (strain DSM 15242 / JCM 11007 / NBRC 100824 / MB4) (Thermoanaerobacter tengcongensis)).